Consider the following 631-residue polypeptide: MLYHENFDVIVVGGGHAGTEAALASARTGQKTLLLTHNIDTLGQMSCNPAIGGIGKGHLVKEVDAMGGLMAEAIDHAGIQFRTLNASKGPAVRATRAQADRALYKAYVRNALENAPNLTLFQQSVDDLIVEQDRVVGVVTQMGLKFHAKAVVLTVGTFLGGKIHIGMESSSGGRAGDPPSIALADRLRELPFRVDRLKTGTPPRIDARTVDFSVLEAQHGDNPTPVFSFMGKREHHPRQIPCFITHTNEQTHEVIRNNLDRSPMYAGVIEGIGPRYCPSIEDKVMRFADKNSHQIFIEPEGLTTHELYPNGISTSLPFDVQVQIVRSMKGFENAHIVRPGYAIEYDFFDPRDLKQTYETKFISGLFFAGQINGTTGYEEAAAQGLMAGLNASLYSQGKEGWSPRRDQAYMGVLIDDLSTMGTKEPYRMFTSRAEYRLLLREDNADLRLTEKARELGLIDDVRWARFNEKIENMETERQRLKSTWVNPNSAGIDELNKLLKTPMAREASGEDLLRRPEISYSQLTQLDAFAPALEDQQAAEQVEIQVKYDGYIKRQQEEIEKSLRHEHTKLPADLDYKDVKGLSNEVVAKLSEAKPESIGIASRISGITPAAISILLVHLKKHGLLKKGEEE.

FAD-binding positions include 13 to 18, Val-125, and Ser-180; that span reads GGGHAG. 273 to 287 lines the NAD(+) pocket; sequence GPRYCPSIEDKVMRF. Gln-370 is a binding site for FAD.

It belongs to the MnmG family. Homodimer. Heterotetramer of two MnmE and two MnmG subunits. FAD serves as cofactor.

The protein localises to the cytoplasm. Its function is as follows. NAD-binding protein involved in the addition of a carboxymethylaminomethyl (cmnm) group at the wobble position (U34) of certain tRNAs, forming tRNA-cmnm(5)s(2)U34. The chain is tRNA uridine 5-carboxymethylaminomethyl modification enzyme MnmG from Vibrio parahaemolyticus serotype O3:K6 (strain RIMD 2210633).